Here is a 446-residue protein sequence, read N- to C-terminus: Sphingomyelinase phosphodiesterase C (446 aa).

The signal sequence occupies residues 1–26 (MKFRNNLTLYLIFIIVFTIYISLTIS). The N-linked (GlcNAc...) asparagine glycan is linked to Asn6. Residues Asp39 and His41 each contribute to the Zn(2+) site. Cysteines 56 and 78 form a disulfide. Residue Asp107 coordinates Zn(2+). Asn118 and Asn128 each carry an N-linked (GlcNAc...) asparagine glycan. Asn148 contributes to the Zn(2+) binding site. Asn178, Asn217, Asn229, and Asn234 each carry an N-linked (GlcNAc...) asparagine glycan. Residues His247, His287, and His289 each contribute to the Zn(2+) site. Asn342 and Asn357 each carry an N-linked (GlcNAc...) asparagine glycan. Cys429 and Cys442 are disulfide-bonded.

This sequence belongs to the acid sphingomyelinase family. Zn(2+) serves as cofactor.

It is found in the secreted. The chain is Sphingomyelinase phosphodiesterase C (sgmC) from Dictyostelium discoideum (Social amoeba).